Here is a 201-residue protein sequence, read N- to C-terminus: Phosphatidylglycerophosphatase and protein-tyrosine phosphatase 1 (201 aa).

The transit peptide at 1–27 (MAATALLEAGLARVLFYPTLLYTLFRG) directs the protein to the mitochondrion. Positions 37-188 (WYHRIDPTVL…LKEFHKQITA (152 aa)) constitute a Tyrosine-protein phosphatase domain. The active-site Phosphocysteine intermediate is Cys-132.

This sequence belongs to the protein-tyrosine phosphatase family. Non-receptor class dual specificity subfamily. In terms of assembly, interacts with STYXL1; the interaction inhibits PTPMT1 catalytic activity.

Its subcellular location is the mitochondrion inner membrane. It carries out the reaction a 1,2-diacyl-sn-glycero-3-phospho-(1'-sn-glycero-3'-phosphate) + H2O = a 1,2-diacyl-sn-glycero-3-phospho-(1'-sn-glycerol) + phosphate. The catalysed reaction is O-phospho-L-tyrosyl-[protein] + H2O = L-tyrosyl-[protein] + phosphate. The enzyme catalyses O-phospho-L-seryl-[protein] + H2O = L-seryl-[protein] + phosphate. It catalyses the reaction O-phospho-L-threonyl-[protein] + H2O = L-threonyl-[protein] + phosphate. It carries out the reaction 1,2-di-(9Z-octadecenoyl)-sn-glycero-3-phospho-(1'-sn-glycerol-3'-phosphate) + H2O = 1,2-di-(9Z-octadecenoyl)-sn-glycero-3-phospho-(1'-sn-glycerol) + phosphate. The catalysed reaction is 1,2-dioctanoyl-sn-glycero-3-phospho-(1D-myo-inositol-5-phosphate) + H2O = 1,2-dioctanoyl-sn-glycero-3-phospho-(1D-myo-inositol) + phosphate. The enzyme catalyses a 1-acyl-2-hexanoyl-sn-glycero-3-phospho-(1D-myo-inositol-5-phosphate) + H2O = a 1-acyl-2-hexanoyl-sn-glycero-3-phospho-(1D-myo-inositol) + phosphate. It catalyses the reaction 1,2-dibutyryl-sn-glycero-3-phospho-(1D-myo-inositol-5-phosphate) + H2O = 1,2-dibutyryl-sn-glycero-3-phospho-(1D-myo-inositol) + phosphate. It participates in phospholipid metabolism; phosphatidylglycerol biosynthesis; phosphatidylglycerol from CDP-diacylglycerol: step 2/2. Lipid phosphatase which dephosphorylates phosphatidylglycerophosphate (PGP) to phosphatidylglycerol (PG). PGP is an essential intermediate in the biosynthetic pathway of cardiolipin, a mitochondrial-specific phospholipid regulating the membrane integrity and activities of the organelle. Has also been shown to display phosphatase activity toward phosphoprotein substrates, specifically mediates dephosphorylation of mitochondrial proteins, thereby playing an essential role in ATP production. Has probably a preference for proteins phosphorylated on Ser and/or Thr residues compared to proteins phosphorylated on Tyr residues. Probably involved in regulation of insulin secretion in pancreatic beta cells. May prevent intrinsic apoptosis, probably by regulating mitochondrial membrane integrity. This is Phosphatidylglycerophosphatase and protein-tyrosine phosphatase 1 from Homo sapiens (Human).